The sequence spans 189 residues: Probable nicotinate-nucleotide adenylyltransferase (189 aa).

It belongs to the NadD family.

It carries out the reaction nicotinate beta-D-ribonucleotide + ATP + H(+) = deamido-NAD(+) + diphosphate. It functions in the pathway cofactor biosynthesis; NAD(+) biosynthesis; deamido-NAD(+) from nicotinate D-ribonucleotide: step 1/1. Its function is as follows. Catalyzes the reversible adenylation of nicotinate mononucleotide (NaMN) to nicotinic acid adenine dinucleotide (NaAD). This chain is Probable nicotinate-nucleotide adenylyltransferase, found in Staphylococcus aureus (strain bovine RF122 / ET3-1).